The sequence spans 85 residues: Large ribosomal subunit protein bL27 (85 aa).

The tract at residues 1-21 (MAHKKAGGSTRNGRDSRGKRL) is disordered.

Belongs to the bacterial ribosomal protein bL27 family.

This chain is Large ribosomal subunit protein bL27, found in Blochmanniella floridana.